A 513-amino-acid chain; its full sequence is Cyclin-dependent kinase C-2 (513 aa).

The 301-residue stretch at 25–325 folds into the Protein kinase domain; it reads FEKLEQIGEG…AKDALDAEYF (301 aa). Residues 31-39 and Lys54 contribute to the ATP site; that span reads IGEGTYGQV. Residue Thr35 is modified to Phosphothreonine. Phosphotyrosine is present on Tyr36. The active-site Proton acceptor is the Asp164. Ser191 carries the phosphoserine modification. The residue at position 198 (Thr198) is a Phosphothreonine. Positions 336-348 are enriched in basic and acidic residues; that stretch reads SLPKYEASHEFQT. The interval 336–513 is disordered; the sequence is SLPKYEASHE…RNQQQYGNWQ (178 aa). Positions 417–433 are enriched in low complexity; that stretch reads PNRYPQGGNQGGYNPNR. 2 stretches are compositionally biased toward gly residues: residues 457 to 478 and 485 to 494; these read GGGM…GVGG and GPYGASGPGR. Positions 497–513 are enriched in polar residues; sequence NYNQGGSRNQQQYGNWQ.

It belongs to the protein kinase superfamily. CMGC Ser/Thr protein kinase family. CDC2/CDKX subfamily.

It catalyses the reaction L-seryl-[protein] + ATP = O-phospho-L-seryl-[protein] + ADP + H(+). The enzyme catalyses L-threonyl-[protein] + ATP = O-phospho-L-threonyl-[protein] + ADP + H(+). The catalysed reaction is [DNA-directed RNA polymerase] + ATP = phospho-[DNA-directed RNA polymerase] + ADP + H(+). This Oryza sativa subsp. japonica (Rice) protein is Cyclin-dependent kinase C-2 (CDKC-2).